The chain runs to 435 residues: Tol-Pal system protein TolB (435 aa).

A signal peptide spans methionine 1–alanine 24.

It belongs to the TolB family. In terms of assembly, the Tol-Pal system is composed of five core proteins: the inner membrane proteins TolA, TolQ and TolR, the periplasmic protein TolB and the outer membrane protein Pal. They form a network linking the inner and outer membranes and the peptidoglycan layer.

It localises to the periplasm. In terms of biological role, part of the Tol-Pal system, which plays a role in outer membrane invagination during cell division and is important for maintaining outer membrane integrity. The chain is Tol-Pal system protein TolB from Thioalkalivibrio sulfidiphilus (strain HL-EbGR7).